We begin with the raw amino-acid sequence, 881 residues long: Alanine--tRNA ligase (881 aa).

4 residues coordinate Zn(2+): His568, His572, Cys670, and His674.

Belongs to the class-II aminoacyl-tRNA synthetase family. Zn(2+) is required as a cofactor.

Its subcellular location is the cytoplasm. The enzyme catalyses tRNA(Ala) + L-alanine + ATP = L-alanyl-tRNA(Ala) + AMP + diphosphate. In terms of biological role, catalyzes the attachment of alanine to tRNA(Ala) in a two-step reaction: alanine is first activated by ATP to form Ala-AMP and then transferred to the acceptor end of tRNA(Ala). Also edits incorrectly charged Ser-tRNA(Ala) and Gly-tRNA(Ala) via its editing domain. This Clostridium acetobutylicum (strain ATCC 824 / DSM 792 / JCM 1419 / IAM 19013 / LMG 5710 / NBRC 13948 / NRRL B-527 / VKM B-1787 / 2291 / W) protein is Alanine--tRNA ligase.